A 129-amino-acid polypeptide reads, in one-letter code: Glycine cleavage system H protein (129 aa).

In terms of domain architecture, Lipoyl-binding spans 24 to 106 (LFKIGVSEFA…IGDGWLLIIK (83 aa)). The residue at position 65 (Lys-65) is an N6-lipoyllysine.

Belongs to the GcvH family. In terms of assembly, the glycine cleavage system is composed of four proteins: P, T, L and H. The cofactor is (R)-lipoate.

Functionally, the glycine cleavage system catalyzes the degradation of glycine. The H protein shuttles the methylamine group of glycine from the P protein to the T protein. This chain is Glycine cleavage system H protein, found in Prochlorococcus marinus subsp. pastoris (strain CCMP1986 / NIES-2087 / MED4).